The chain runs to 314 residues: UDP-3-O-acyl-N-acetylglucosamine deacetylase (314 aa).

Zn(2+)-binding residues include His82, His239, and Asp243. His266 (proton donor) is an active-site residue.

Belongs to the LpxC family. Requires Zn(2+) as cofactor.

It catalyses the reaction a UDP-3-O-[(3R)-3-hydroxyacyl]-N-acetyl-alpha-D-glucosamine + H2O = a UDP-3-O-[(3R)-3-hydroxyacyl]-alpha-D-glucosamine + acetate. It participates in glycolipid biosynthesis; lipid IV(A) biosynthesis; lipid IV(A) from (3R)-3-hydroxytetradecanoyl-[acyl-carrier-protein] and UDP-N-acetyl-alpha-D-glucosamine: step 2/6. In terms of biological role, catalyzes the hydrolysis of UDP-3-O-myristoyl-N-acetylglucosamine to form UDP-3-O-myristoylglucosamine and acetate, the committed step in lipid A biosynthesis. In Myxococcus xanthus (strain DK1622), this protein is UDP-3-O-acyl-N-acetylglucosamine deacetylase.